Here is a 372-residue protein sequence, read N- to C-terminus: Glutamate 5-kinase (372 aa).

ATP is bound at residue Lys14. Positions 54, 141, and 153 each coordinate substrate. ATP contacts are provided by residues 173-174 (TD) and 215-221 (TGGMATK). In terms of domain architecture, PUA spans 280–358 (RGQVVLDTGA…DNIEEILGYD (79 aa)).

It belongs to the glutamate 5-kinase family.

It localises to the cytoplasm. It catalyses the reaction L-glutamate + ATP = L-glutamyl 5-phosphate + ADP. The protein operates within amino-acid biosynthesis; L-proline biosynthesis; L-glutamate 5-semialdehyde from L-glutamate: step 1/2. Functionally, catalyzes the transfer of a phosphate group to glutamate to form L-glutamate 5-phosphate. The sequence is that of Glutamate 5-kinase from Shewanella halifaxensis (strain HAW-EB4).